We begin with the raw amino-acid sequence, 343 residues long: Phenylalanine--tRNA ligase alpha subunit (343 aa).

Glu256 lines the Mg(2+) pocket.

This sequence belongs to the class-II aminoacyl-tRNA synthetase family. Phe-tRNA synthetase alpha subunit type 1 subfamily. As to quaternary structure, tetramer of two alpha and two beta subunits. It depends on Mg(2+) as a cofactor.

The protein resides in the cytoplasm. The enzyme catalyses tRNA(Phe) + L-phenylalanine + ATP = L-phenylalanyl-tRNA(Phe) + AMP + diphosphate + H(+). This is Phenylalanine--tRNA ligase alpha subunit from Aster yellows witches'-broom phytoplasma (strain AYWB).